Here is a 430-residue protein sequence, read N- to C-terminus: Enolase (430 aa).

(2R)-2-phosphoglycerate is bound at residue Q165. E207 serves as the catalytic Proton donor. Mg(2+) contacts are provided by D244, E287, and D314. K339, R368, S369, and K390 together coordinate (2R)-2-phosphoglycerate. The active-site Proton acceptor is the K339.

The protein belongs to the enolase family. In terms of assembly, component of the RNA degradosome, a multiprotein complex involved in RNA processing and mRNA degradation. It depends on Mg(2+) as a cofactor.

Its subcellular location is the cytoplasm. The protein localises to the secreted. The protein resides in the cell surface. The catalysed reaction is (2R)-2-phosphoglycerate = phosphoenolpyruvate + H2O. Its pathway is carbohydrate degradation; glycolysis; pyruvate from D-glyceraldehyde 3-phosphate: step 4/5. In terms of biological role, catalyzes the reversible conversion of 2-phosphoglycerate (2-PG) into phosphoenolpyruvate (PEP). It is essential for the degradation of carbohydrates via glycolysis. The sequence is that of Enolase from Xanthomonas euvesicatoria pv. vesicatoria (strain 85-10) (Xanthomonas campestris pv. vesicatoria).